An 875-amino-acid polypeptide reads, in one-letter code: Probable ubiquitin carboxyl-terminal hydrolase 7 (875 aa).

The segment at 54–167 (KECSHLKKGV…RDVQQFICSN (114 aa)) adopts a UBP-type zinc-finger fold. Zn(2+) contacts are provided by cysteine 56, histidine 58, cysteine 83, cysteine 86, cysteine 101, cysteine 104, cysteine 109, histidine 116, histidine 120, histidine 127, cysteine 140, and cysteine 143. A USP domain is found at 208–875 (PGLKNLGATC…EAYMLFYERV (668 aa)). Cysteine 217 acts as the Nucleophile in catalysis. A phosphoserine mark is found at serine 333 and serine 337. The disordered stretch occupies residues 396–486 (YSKELSQSSD…ASPKKEVLKS (91 aa)). The span at 401–438 (SQSSDSSQHQHDSFLPANSSPLAASSTKSLPSSELLDS) shows a compositional bias: low complexity. The span at 473-484 (NHEEASPKKEVL) shows a compositional bias: basic and acidic residues. Phosphoserine occurs at positions 486 and 493. A compositionally biased stretch (basic residues) spans 575–586 (RSRFSRSPKKSS). The tract at residues 575–628 (RSRFSRSPKKSSVKIVVDNANDDTDQAPTTNSSSLNENLLGGHASENDKSLKQS) is disordered. Polar residues predominate over residues 600–611 (QAPTTNSSSLNE). Serine 645 bears the Phosphoserine mark. Catalysis depends on histidine 812, which acts as the Proton acceptor.

The protein belongs to the peptidase C19 family.

It catalyses the reaction Thiol-dependent hydrolysis of ester, thioester, amide, peptide and isopeptide bonds formed by the C-terminal Gly of ubiquitin (a 76-residue protein attached to proteins as an intracellular targeting signal).. The polypeptide is Probable ubiquitin carboxyl-terminal hydrolase 7 (ubp7) (Schizosaccharomyces pombe (strain 972 / ATCC 24843) (Fission yeast)).